The primary structure comprises 276 residues: Diaminopimelate epimerase (276 aa).

The substrate site is built by Asn-13, Gln-46, and Asn-66. The active-site Proton donor is Cys-75. Residues 76 to 77 (GN), Asn-159, Asn-192, and 210 to 211 (ER) each bind substrate. The Proton acceptor role is filled by Cys-219. 220–221 (GT) serves as a coordination point for substrate.

Belongs to the diaminopimelate epimerase family. In terms of assembly, homodimer.

The protein localises to the cytoplasm. The catalysed reaction is (2S,6S)-2,6-diaminopimelate = meso-2,6-diaminopimelate. It participates in amino-acid biosynthesis; L-lysine biosynthesis via DAP pathway; DL-2,6-diaminopimelate from LL-2,6-diaminopimelate: step 1/1. Its function is as follows. Catalyzes the stereoinversion of LL-2,6-diaminopimelate (L,L-DAP) to meso-diaminopimelate (meso-DAP), a precursor of L-lysine and an essential component of the bacterial peptidoglycan. This is Diaminopimelate epimerase from Pseudomonas savastanoi pv. phaseolicola (strain 1448A / Race 6) (Pseudomonas syringae pv. phaseolicola (strain 1448A / Race 6)).